The primary structure comprises 300 residues: MSYRELVVELAREHAEALSDALLELGALSVSVEDADADTPDEQPLFGEPGLTPERTAWTHSRVIALLAPEHEPAVLLAAAANELGLADTPSFSVRAVEEQDWVRLTQSQFDPIPIGERIWVVPSWHDAPDPDALVLELDPGLAFGTGSHPTTRLCMEWLEQSVQKDQSVLDYGCGSGILAILAKKCGANPVFGIDIDPQAVESARHNSERNRAEITYGLPADCPAGEFDIVVANILSNPLKLMASMLSSKVKPGGRIALSGILARQAEEVASVYRQWIDIAVWREHEGWVCLAGTRRESN.

Residues Thr-152, Gly-173, Asp-195, and Asn-234 each coordinate S-adenosyl-L-methionine.

This sequence belongs to the methyltransferase superfamily. PrmA family.

Its subcellular location is the cytoplasm. It catalyses the reaction L-lysyl-[protein] + 3 S-adenosyl-L-methionine = N(6),N(6),N(6)-trimethyl-L-lysyl-[protein] + 3 S-adenosyl-L-homocysteine + 3 H(+). Methylates ribosomal protein L11. The chain is Ribosomal protein L11 methyltransferase from Paraburkholderia phymatum (strain DSM 17167 / CIP 108236 / LMG 21445 / STM815) (Burkholderia phymatum).